The following is a 296-amino-acid chain: Nucleotide-binding protein SPCG_1551 (296 aa).

13-20 (GMSGAGKT) provides a ligand contact to ATP. 63–66 (DMRS) contacts GTP.

This sequence belongs to the RapZ-like family.

Its function is as follows. Displays ATPase and GTPase activities. The polypeptide is Nucleotide-binding protein SPCG_1551 (Streptococcus pneumoniae (strain CGSP14)).